The primary structure comprises 215 residues: Calmodulin-like protein 5 (215 aa).

Residues 38 to 61 (KNSPPSPSTMLPSPSSSSAPTKRI) form a disordered region. The span at 45-57 (STMLPSPSSSSAP) shows a compositional bias: low complexity. EF-hand domains lie at 61-96 (IDPSELKRVFQMFDKNGDGRITKEELNDSLENLGIY), 97-132 (IPDKDLTQMIHKIDANGDGCVDIDEFESLYSSIVDE), 139-174 (TEEEDMKDAFNVFDQDGDGFITVEELKSVMASLGLK), and 177-212 (KTLDGCKKMIMQVDADGDGRVNYKEFLQMMKGGGFS). Ca(2+) is bound by residues Asp74, Asn76, Asp78, Arg80, Glu85, Asp110, Asn112, Asp114, Cys116, Glu121, Asp152, Asp154, Asp156, Glu163, Asp190, Asp192, Asp194, Arg196, and Glu201.

This sequence belongs to the calmodulin family.

Functionally, potential calcium sensor. The polypeptide is Calmodulin-like protein 5 (CML5) (Arabidopsis thaliana (Mouse-ear cress)).